A 362-amino-acid polypeptide reads, in one-letter code: Putative transport protein BB_0006 (362 aa).

Transmembrane regions (helical) follow at residues 20 to 40 (FYCI…EAVF), 43 to 63 (LAIS…LARF), 68 to 88 (FLIV…IFSF), 144 to 164 (EIIG…FLLS), 212 to 232 (ILVF…WAVL), 234 to 254 (FVFN…IVIT), 265 to 285 (IVLY…NILE), and 304 to 326 (LFFW…TVIV).

The protein belongs to the autoinducer-2 exporter (AI-2E) (TC 2.A.86) family.

It localises to the cell membrane. The protein is Putative transport protein BB_0006 of Borreliella burgdorferi (strain ATCC 35210 / DSM 4680 / CIP 102532 / B31) (Borrelia burgdorferi).